A 1404-amino-acid polypeptide reads, in one-letter code: DNA-directed RNA polymerase subunit beta' (1404 aa).

Residues C70, C72, C85, and C88 each coordinate Zn(2+). 3 residues coordinate Mg(2+): D460, D462, and D464. Residues C814, C888, C895, and C898 each contribute to the Zn(2+) site.

Belongs to the RNA polymerase beta' chain family. As to quaternary structure, the RNAP catalytic core consists of 2 alpha, 1 beta, 1 beta' and 1 omega subunit. When a sigma factor is associated with the core the holoenzyme is formed, which can initiate transcription. Mg(2+) is required as a cofactor. Requires Zn(2+) as cofactor.

It carries out the reaction RNA(n) + a ribonucleoside 5'-triphosphate = RNA(n+1) + diphosphate. Its function is as follows. DNA-dependent RNA polymerase catalyzes the transcription of DNA into RNA using the four ribonucleoside triphosphates as substrates. The sequence is that of DNA-directed RNA polymerase subunit beta' from Shewanella loihica (strain ATCC BAA-1088 / PV-4).